The chain runs to 485 residues: Aspartyl/glutamyl-tRNA(Asn/Gln) amidotransferase subunit B (485 aa).

This sequence belongs to the GatB/GatE family. GatB subfamily. As to quaternary structure, heterotrimer of A, B and C subunits.

The catalysed reaction is L-glutamyl-tRNA(Gln) + L-glutamine + ATP + H2O = L-glutaminyl-tRNA(Gln) + L-glutamate + ADP + phosphate + H(+). It carries out the reaction L-aspartyl-tRNA(Asn) + L-glutamine + ATP + H2O = L-asparaginyl-tRNA(Asn) + L-glutamate + ADP + phosphate + 2 H(+). In terms of biological role, allows the formation of correctly charged Asn-tRNA(Asn) or Gln-tRNA(Gln) through the transamidation of misacylated Asp-tRNA(Asn) or Glu-tRNA(Gln) in organisms which lack either or both of asparaginyl-tRNA or glutaminyl-tRNA synthetases. The reaction takes place in the presence of glutamine and ATP through an activated phospho-Asp-tRNA(Asn) or phospho-Glu-tRNA(Gln). The chain is Aspartyl/glutamyl-tRNA(Asn/Gln) amidotransferase subunit B from Borrelia duttonii (strain Ly).